A 371-amino-acid chain; its full sequence is Putrescine N-methyltransferase 2 (371 aa).

Composition is skewed to polar residues over residues 1–14 (MEVI…STIF) and 23–70 (GHQN…HDNG). The interval 1 to 70 (MEVISTNTNG…QNGTISHDNG (70 aa)) is disordered. The region spanning 82-319 (PGWFSEFSAL…GVIGYMLCST (238 aa)) is the PABS domain. S-adenosyl-L-methionine-binding positions include glutamine 113, glutamate 188, and 219-220 (DG). Aspartate 238 serves as the catalytic Proton acceptor. Residue tyrosine 307 participates in S-adenosyl-L-methionine binding.

Belongs to the class I-like SAM-binding methyltransferase superfamily. Spermidine/spermine synthase family. Mainly expressed in roots.

It catalyses the reaction putrescine + S-adenosyl-L-methionine = N-methylputrescine + S-adenosyl-L-homocysteine + H(+). It participates in alkaloid biosynthesis; nicotine biosynthesis. Involved in the biosynthesis of pyridine alkaloid natural products, leading mainly to the production of anabasine, anatabine, nicotine and nornicotine, effective deterrents against herbivores with antiparasitic and pesticide properties (neurotoxins); nornicotine serves as the precursor in the synthesis of the carcinogen compound N'-nitrosonornicotine (NNN). Methyltransferase that mediates the conversion of putrescine to N-methylputrescine. This is Putrescine N-methyltransferase 2 from Nicotiana attenuata (Coyote tobacco).